We begin with the raw amino-acid sequence, 97 residues long: Venom peptide HsVx1 (97 aa).

Residues 1–20 (MSHLRIAVTFLCTLFALTAG) form the signal peptide.

It belongs to the scorpion La1-like peptide family. In terms of processing, contains 4 disulfide bonds. Expressed by the venom gland.

The protein resides in the secreted. In Heterometrus spinifer (Asia giant forest scorpion), this protein is Venom peptide HsVx1.